Reading from the N-terminus, the 385-residue chain is tRNA 2-selenouridine synthase (385 aa).

One can recognise a Rhodanese domain in the interval 15–138 (FIADTPLIDV…ARQFLISTID (124 aa)). Residue Cys98 is the S-selanylcysteine intermediate of the active site.

It belongs to the SelU family. Monomer.

It catalyses the reaction 5-methylaminomethyl-2-thiouridine(34) in tRNA + selenophosphate + (2E)-geranyl diphosphate + H2O + H(+) = 5-methylaminomethyl-2-selenouridine(34) in tRNA + (2E)-thiogeraniol + phosphate + diphosphate. The catalysed reaction is 5-methylaminomethyl-2-thiouridine(34) in tRNA + (2E)-geranyl diphosphate = 5-methylaminomethyl-S-(2E)-geranyl-thiouridine(34) in tRNA + diphosphate. It carries out the reaction 5-methylaminomethyl-S-(2E)-geranyl-thiouridine(34) in tRNA + selenophosphate + H(+) = 5-methylaminomethyl-2-(Se-phospho)selenouridine(34) in tRNA + (2E)-thiogeraniol. The enzyme catalyses 5-methylaminomethyl-2-(Se-phospho)selenouridine(34) in tRNA + H2O = 5-methylaminomethyl-2-selenouridine(34) in tRNA + phosphate. Involved in the post-transcriptional modification of the uridine at the wobble position (U34) of tRNA(Lys), tRNA(Glu) and tRNA(Gln). Catalyzes the conversion of 2-thiouridine (S2U-RNA) to 2-selenouridine (Se2U-RNA). Acts in a two-step process involving geranylation of 2-thiouridine (S2U) to S-geranyl-2-thiouridine (geS2U) and subsequent selenation of the latter derivative to 2-selenouridine (Se2U) in the tRNA chain. In Nitrosomonas europaea (strain ATCC 19718 / CIP 103999 / KCTC 2705 / NBRC 14298), this protein is tRNA 2-selenouridine synthase.